The following is a 274-amino-acid chain: Serine protease 28 (274 aa).

A signal peptide spans Met-1–Ser-26. One can recognise a Peptidase S1 domain in the interval Ile-31–Gln-274. Cys-62 and Cys-78 are joined by a disulfide. The active-site Charge relay system is His-77. Asn-106 carries N-linked (GlcNAc...) asparagine glycosylation. The Charge relay system role is filled by Asp-124. Intrachain disulfides connect Cys-158/Cys-233, Cys-191/Cys-214, and Cys-223/Cys-251. Ser-227 serves as the catalytic Charge relay system.

Belongs to the peptidase S1 family. Homooligomer, heterodimer and heterotetramer. Able to form homo- and hetero- tetrameric structures. Heterotetramer is far more stable than the homotetramer. Expressed in embryos throughout the preimplantation period, during blastocyst hatching and embryo outgrowth. Found in uterus especially in glandular epithelium.

It localises to the secreted. With respect to regulation, inhibited by benzamidine, (4-amidino-phenyl)-methane-sulfonyl (APMSF), N-p-tosyl-L-lysine chloromethylketone (TLCK), gabexate, mesylate, BABIM and trypsin soybean inhibitor (TSI). Functionally, involved in embryo hatching and implantation. The polypeptide is Serine protease 28 (Prss28) (Mus musculus (Mouse)).